The primary structure comprises 184 residues: Peptide deformylase 2 (184 aa).

Fe cation contacts are provided by Cys110 and His153. Glu154 is an active-site residue. Residue His157 participates in Fe cation binding.

It belongs to the polypeptide deformylase family. Requires Fe(2+) as cofactor.

The enzyme catalyses N-terminal N-formyl-L-methionyl-[peptide] + H2O = N-terminal L-methionyl-[peptide] + formate. Removes the formyl group from the N-terminal Met of newly synthesized proteins. Requires at least a dipeptide for an efficient rate of reaction. N-terminal L-methionine is a prerequisite for activity but the enzyme has broad specificity at other positions. This is Peptide deformylase 2 from Bacillus anthracis.